The following is a 429-amino-acid chain: 3-phosphoshikimate 1-carboxyvinyltransferase (429 aa).

3-phosphoshikimate is bound by residues Lys20, Ser21, and Arg25. Lys20 is a phosphoenolpyruvate binding site. Phosphoenolpyruvate-binding residues include Gly89 and Arg118. Residues Ser164, Ser165, Gln166, Ser192, Asp311, and Lys338 each contribute to the 3-phosphoshikimate site. Gln166 lines the phosphoenolpyruvate pocket. The Proton acceptor role is filled by Asp311. The phosphoenolpyruvate site is built by Arg342 and Arg384.

It belongs to the EPSP synthase family. In terms of assembly, monomer.

It is found in the cytoplasm. The enzyme catalyses 3-phosphoshikimate + phosphoenolpyruvate = 5-O-(1-carboxyvinyl)-3-phosphoshikimate + phosphate. The protein operates within metabolic intermediate biosynthesis; chorismate biosynthesis. Its function is as follows. Catalyzes the transfer of the enolpyruvyl moiety of phosphoenolpyruvate (PEP) to the 5-hydroxyl of shikimate-3-phosphate (S3P) to produce enolpyruvyl shikimate-3-phosphate and inorganic phosphate. In Methanococcus vannielii (strain ATCC 35089 / DSM 1224 / JCM 13029 / OCM 148 / SB), this protein is 3-phosphoshikimate 1-carboxyvinyltransferase.